Reading from the N-terminus, the 211-residue chain is Imidazole glycerol phosphate synthase subunit HisH (211 aa).

The Glutamine amidotransferase type-1 domain occupies Val3–Ala211. The Nucleophile role is filled by Cys81. Catalysis depends on residues His186 and Glu188.

As to quaternary structure, heterodimer of HisH and HisF.

Its subcellular location is the cytoplasm. It catalyses the reaction 5-[(5-phospho-1-deoxy-D-ribulos-1-ylimino)methylamino]-1-(5-phospho-beta-D-ribosyl)imidazole-4-carboxamide + L-glutamine = D-erythro-1-(imidazol-4-yl)glycerol 3-phosphate + 5-amino-1-(5-phospho-beta-D-ribosyl)imidazole-4-carboxamide + L-glutamate + H(+). It carries out the reaction L-glutamine + H2O = L-glutamate + NH4(+). It participates in amino-acid biosynthesis; L-histidine biosynthesis; L-histidine from 5-phospho-alpha-D-ribose 1-diphosphate: step 5/9. IGPS catalyzes the conversion of PRFAR and glutamine to IGP, AICAR and glutamate. The HisH subunit catalyzes the hydrolysis of glutamine to glutamate and ammonia as part of the synthesis of IGP and AICAR. The resulting ammonia molecule is channeled to the active site of HisF. This Nostoc punctiforme (strain ATCC 29133 / PCC 73102) protein is Imidazole glycerol phosphate synthase subunit HisH.